The chain runs to 254 residues: Methyltransferase-like protein 23 (254 aa).

Positions 1–27 (MKSFIFRQNPRKQQQEQNNLVDYSDSD) are disordered. Polar residues predominate over residues 11-21 (RKQQQEQNNLV).

This sequence belongs to the methyltransferase superfamily. METTL23 family.

Functionally, probable methyltransferase. This Dictyostelium discoideum (Social amoeba) protein is Methyltransferase-like protein 23.